The sequence spans 162 residues: tRNA (cytidine(34)-2'-O)-methyltransferase (162 aa).

S-adenosyl-L-methionine is bound by residues L80, G102, L124, and S132.

The protein belongs to the class IV-like SAM-binding methyltransferase superfamily. RNA methyltransferase TrmH family. TrmL subfamily. Homodimer.

The protein resides in the cytoplasm. The enzyme catalyses cytidine(34) in tRNA + S-adenosyl-L-methionine = 2'-O-methylcytidine(34) in tRNA + S-adenosyl-L-homocysteine + H(+). It carries out the reaction 5-carboxymethylaminomethyluridine(34) in tRNA(Leu) + S-adenosyl-L-methionine = 5-carboxymethylaminomethyl-2'-O-methyluridine(34) in tRNA(Leu) + S-adenosyl-L-homocysteine + H(+). Its function is as follows. Methylates the ribose at the nucleotide 34 wobble position in the two leucyl isoacceptors tRNA(Leu)(CmAA) and tRNA(Leu)(cmnm5UmAA). Catalyzes the methyl transfer from S-adenosyl-L-methionine to the 2'-OH of the wobble nucleotide. This Acidovorax sp. (strain JS42) protein is tRNA (cytidine(34)-2'-O)-methyltransferase.